The following is a 557-amino-acid chain: E3 ubiquitin-protein ligase rnf168 (557 aa).

An RING-type zinc finger spans residues 16 to 55 (CPICQEILLEPVTLPCKHTLCNPCFQMTVEKASLCCPFCR). The short motif at 112 to 130 (LCQPGEIRQEYEAEVSKIE) is the LR motif 1 element. The UMI motif signature appears at 145–153 (EDYIQKLLA). 2 consecutive short sequence motifs (MIU motif) follow at residues 170–193 (MEEQ…VSNA) and 422–445 (RRRQ…KELK). An LR motif 2 motif is present at residues 449–460 (RGKGSPDEYELR). Residues 482-543 (PLRKEIPVQD…GINVLKPINK (62 aa)) are disordered. Polar residues predominate over residues 490-500 (QDNSRNTQSEY). Residues 508–521 (PSRKNSVRSARVRQ) are compositionally biased toward basic residues.

The protein belongs to the RNF168 family. Monomer.

It is found in the nucleus. The catalysed reaction is S-ubiquitinyl-[E2 ubiquitin-conjugating enzyme]-L-cysteine + [acceptor protein]-L-lysine = [E2 ubiquitin-conjugating enzyme]-L-cysteine + N(6)-ubiquitinyl-[acceptor protein]-L-lysine.. Its pathway is protein modification; protein ubiquitination. In terms of biological role, E3 ubiquitin-protein ligase required for accumulation of repair proteins to sites of DNA damage. Acts with ube2n/ubc13 to amplify the rnf8-dependent histone ubiquitination. Recruited to sites of DNA damage at double-strand breaks (DSBs) by binding to ubiquitinated histone H2A and ubiquitinates histone H2A and H2AX, leading to amplify the rnf8-dependent H2A ubiquitination and promoting the formation of 'Lys-63'-linked ubiquitin conjugates. This leads to concentrate ubiquitinated histones H2A and H2AX at DNA lesions to the threshold required for recruitment of tp53bp1 and brca1. Catalyzes monoubiquitination of 'Lys-13' and 'Lys-15' of nucleosomal histone H2A (H2AK13Ub and H2AK15Ub, respectively). The chain is E3 ubiquitin-protein ligase rnf168 from Xenopus laevis (African clawed frog).